Here is a 320-residue protein sequence, read N- to C-terminus: L-lactate dehydrogenase (320 aa).

NAD(+) contacts are provided by residues valine 18, aspartate 39, arginine 44, tyrosine 69, and 83 to 84 (GA). Substrate is bound by residues glutamine 86 and arginine 92. NAD(+) is bound by residues threonine 105, 122–124 (AAN), and serine 147. Residue 124 to 127 (NPVD) participates in substrate binding. 152–155 (DSAR) serves as a coordination point for substrate. Histidine 179 functions as the Proton acceptor in the catalytic mechanism. The residue at position 223 (tyrosine 223) is a Phosphotyrosine. Threonine 232 provides a ligand contact to substrate.

It belongs to the LDH/MDH superfamily. LDH family. In terms of assembly, homotetramer.

It localises to the cytoplasm. The enzyme catalyses (S)-lactate + NAD(+) = pyruvate + NADH + H(+). Its pathway is fermentation; pyruvate fermentation to lactate; (S)-lactate from pyruvate: step 1/1. Catalyzes the conversion of lactate to pyruvate. The protein is L-lactate dehydrogenase of Pediococcus pentosaceus (strain ATCC 25745 / CCUG 21536 / LMG 10740 / 183-1w).